The primary structure comprises 249 residues: Type III pantothenate kinase (249 aa).

6–13 is a binding site for ATP; sequence DCGNSFIK. Residues Tyr-93 and 100 to 103 each bind substrate; that span reads GMDR. Residue Asp-102 is the Proton acceptor of the active site. Asp-122 serves as a coordination point for K(+). An ATP-binding site is contributed by Thr-125. Thr-181 contributes to the substrate binding site.

Belongs to the type III pantothenate kinase family. In terms of assembly, homodimer. NH4(+) is required as a cofactor. It depends on K(+) as a cofactor.

Its subcellular location is the cytoplasm. It carries out the reaction (R)-pantothenate + ATP = (R)-4'-phosphopantothenate + ADP + H(+). Its pathway is cofactor biosynthesis; coenzyme A biosynthesis; CoA from (R)-pantothenate: step 1/5. Catalyzes the phosphorylation of pantothenate (Pan), the first step in CoA biosynthesis. The protein is Type III pantothenate kinase of Pseudomonas putida (strain ATCC 700007 / DSM 6899 / JCM 31910 / BCRC 17059 / LMG 24140 / F1).